We begin with the raw amino-acid sequence, 816 residues long: MAMWQGAMDNRGFHQGSFSSFQSSSSDEDLMDIPGTAMDFSMRDDVPPLDREIEGNKSYNGGGIGSSNRVMDFLEEPIPGVGTYDDFNTIDWVREKSRDRDRHREITNKSKESTWALIHSVSDAFSGWLLMLLIGLLSGSLAGLIDISAHWMTDLKEGICTGGFWFNHEHCCWNSEHVTFEHRDKCPEWNSWAQLIINTDQGAFAYIVNYFMYVLWALLFAFLAVSLVKAFAPYACGSGIPEIKTILSGFIIRGYLGKWTLVIKTITLVLAVSSGLSLGKEGPLVHVACCCGNILCHCFNKYRKNEAKRREVLSAAAAAGVSVAFGAPIGGVLFSLEEVSYYFPLKTLWRSFFAALVAAFTLRSINPFGNSRLVLFYVEFHTPWHLFELVPFIVLGIFGGLWGALFIRTNIAWCRKRKTTQLGKYPVVEVLIVTAITAILAFPNEYTRMSTSELISELFNDCGLLDSSKLCDYENHFNTSKGGELPDRPAGVGIYSAMWQLALTLILKIVITIFTFGMKIPSGLFIPSMAVGAIAGRLLGVGMEQLAYYHHDWGIFNSWCSQGADCITPGLYAMVGAAACLGGVTRMTVSLVVIMFELTGGLEYIVPLMAAAMTSKWVADALGREGIYDAHIRLNGYPFLEAKEEFAHKTLAMDVMKPRRNDPLLTVLTQDSMTVEDVETIISETTYSGFPVVVSRESQRLVGFVLRRDLIISIENARKKQDGVVSTSIIYFTEHSPPMPPYTPPTLKLRNILDLSPFTVTDLTPMEIVVDIFRKLGLRQCLVTHNGRLLGIITKKDVLKHIAQMANQDPDSILFN.

Residues 1–124 (MAMWQGAMDN…WALIHSVSDA (124 aa)) lie on the Cytoplasmic side of the membrane. Helical transmembrane passes span 125-162 (FSGW…ICTG) and 208-231 (VNYF…VKAF). A Selectivity filter part_1 motif is present at residues 237–241 (GSGIP). Chloride is bound at residue serine 238. The segment at residues 240–247 (IPEIKTIL) is an intramembrane region (helical). The next 2 helical transmembrane spans lie at 256-275 (LGKW…VSSG) and 281-300 (EGPL…HCFN). The Selectivity filter part_2 signature appears at 279–283 (GKEGP). Intramembrane regions (helical) lie at residues 312-324 (VLSA…VSVA) and 328-336 (PIGGVLFSL). A run of 5 helical transmembrane segments spans residues 348–366 (LWRS…RSIN), 389–414 (LVPF…IAWC), 422–442 (LGKY…ILAF), 498–518 (MWQL…TFGM), and 523–542 (GLFI…LGVG). The Selectivity filter part_3 motif lies at 523–527 (GLFIP). Phenylalanine 525 provides a ligand contact to chloride. Residues 570–584 (GLYAMVGAAACLGGV) constitute an intramembrane region (helical). The note=Loop between two helices intramembrane region spans 585–587 (TRM). The segment at residues 588–599 (TVSLVVIMFELT) is an intramembrane region (helical). The note=Loop between two helices intramembrane region spans 600–604 (GGLEY). Residues 605–622 (IVPLMAAAMTSKWVADAL) form a helical membrane-spanning segment. Over 623 to 816 (GREGIYDAHI…NQDPDSILFN (194 aa)) the chain is Cytoplasmic. Position 628 (tyrosine 628) interacts with chloride. CBS domains are found at residues 656–720 (MKPR…ARKK) and 752–812 (ILDL…DPDS). ATP is bound by residues threonine 666, 687 to 689 (YSG), and 794 to 797 (TKKD).

Belongs to the chloride channel (TC 2.A.49) family. ClC-5/CLCN5 subfamily. Interacts with NEDD4 and NEDD4L. Post-translationally, ubiquitinated by NEDD4L in the presence of albumin; which promotes endocytosis and proteasomal degradation. As to expression, kidney specific.

It localises to the golgi apparatus membrane. The protein localises to the endosome membrane. It is found in the cell membrane. It carries out the reaction 2 chloride(in) + H(+)(out) = 2 chloride(out) + H(+)(in). Its function is as follows. Proton-coupled chloride transporter. Functions as antiport system and exchanges chloride ions against protons. Important for normal acidification of the endosome lumen. May play an important role in renal tubular function. The CLC channel family contains both chloride channels and proton-coupled anion transporters that exchange chloride or another anion for protons. The absence of conserved gating glutamate residues is typical for family members that function as channels. This chain is H(+)/Cl(-) exchange transporter 5 (Clcn5), found in Mus musculus (Mouse).